Consider the following 498-residue polypeptide: ATP synthase subunit beta, chloroplastic (498 aa).

An ATP-binding site is contributed by 172-179; that stretch reads GGAGVGKT.

Belongs to the ATPase alpha/beta chains family. F-type ATPases have 2 components, CF(1) - the catalytic core - and CF(0) - the membrane proton channel. CF(1) has five subunits: alpha(3), beta(3), gamma(1), delta(1), epsilon(1). CF(0) has four main subunits: a(1), b(1), b'(1) and c(9-12).

Its subcellular location is the plastid. It is found in the chloroplast thylakoid membrane. The enzyme catalyses ATP + H2O + 4 H(+)(in) = ADP + phosphate + 5 H(+)(out). Its function is as follows. Produces ATP from ADP in the presence of a proton gradient across the membrane. The catalytic sites are hosted primarily by the beta subunits. The protein is ATP synthase subunit beta, chloroplastic of Nymphaea alba (White water-lily).